Consider the following 515-residue polypeptide: Histidine ammonia-lyase (515 aa).

The 5-imidazolinone (Ala-Gly) cross-link spans 145–147 (ASG). The residue at position 146 (serine 146) is a 2,3-didehydroalanine (Ser).

It belongs to the PAL/histidase family. Post-translationally, contains an active site 4-methylidene-imidazol-5-one (MIO), which is formed autocatalytically by cyclization and dehydration of residues Ala-Ser-Gly.

Its subcellular location is the cytoplasm. The enzyme catalyses L-histidine = trans-urocanate + NH4(+). Its pathway is amino-acid degradation; L-histidine degradation into L-glutamate; N-formimidoyl-L-glutamate from L-histidine: step 1/3. In Gluconobacter oxydans (strain 621H) (Gluconobacter suboxydans), this protein is Histidine ammonia-lyase.